Consider the following 329-residue polypeptide: Neuropeptides B/W receptor type 1 (329 aa).

Residues 1–39 (MHNLSLFEPGRGNVSCGGPFLGCPNESNPAPLPLPQPLA) lie on the Extracellular side of the membrane. 3 N-linked (GlcNAc...) asparagine glycosylation sites follow: asparagine 3, asparagine 13, and asparagine 25. Residues 40–63 (VAVPVVYGVICAVGLAGNSAVLYV) form a helical membrane-spanning segment. Residues 64–74 (LLRTPRMKTVT) lie on the Cytoplasmic side of the membrane. Residues 75 to 99 (NVFILNLAIADELFTLVLPINIADF) traverse the membrane as a helical segment. Residues 100–114 (LLRRWPFGEVMCKLI) lie on the Extracellular side of the membrane. A disulfide bridge links cysteine 111 with cysteine 190. A helical membrane pass occupies residues 115-134 (VAVDQYNTFSSLYFLAVMSA). Residues 135 to 159 (DRYLVVLATAESRRVSGRTYGAARA) lie on the Cytoplasmic side of the membrane. A helical membrane pass occupies residues 160 to 179 (VSLAVWALVTLVVLPFAVFA). The Extracellular portion of the chain corresponds to 180-204 (RLDEEQGRRQCVLVFPQPEAFWWRA). The chain crosses the membrane as a helical span at residues 205–226 (SRLYTLVLGFAIPVSTICALYI). Residues 227-250 (TLLCRLRAIQLDSHAKALDRAKKR) are Cytoplasmic-facing. The chain crosses the membrane as a helical span at residues 251–275 (VTLLVVAILAVCLLCWTPYHLSTIV). The Extracellular segment spans residues 276-285 (ALTTDLPQTP). The helical transmembrane segment at 286-300 (LVIGISYFITSLSYA) threads the bilayer. Residues 301 to 329 (NSCLNPFLYAFLDDSFRRSLRQLVSCRTA) lie on the Cytoplasmic side of the membrane.

This sequence belongs to the G-protein coupled receptor 1 family.

It is found in the cell membrane. Functionally, interacts specifically with a number of opioid ligands. Receptor for neuropeptides B and W, which may be involved in neuroendocrine system regulation, food intake and the organization of other signals. The polypeptide is Neuropeptides B/W receptor type 1 (Npbwr1) (Rattus norvegicus (Rat)).